Consider the following 431-residue polypeptide: L-cysteine:1D-myo-inositol 2-amino-2-deoxy-alpha-D-glucopyranoside ligase (431 aa).

Residue cysteine 44 coordinates Zn(2+). L-cysteinyl-5'-AMP-binding positions include 44-47, threonine 59, and 82-84; these read CGIT and NVT. The 'HIGH' region signature appears at 46–56; that stretch reads ITPYDATHLGH. A 'ERGGDP' region motif is present at residues 187 to 192; the sequence is ERGGDP. Residue tryptophan 227 participates in L-cysteinyl-5'-AMP binding. Zn(2+) is bound at residue cysteine 231. 249 to 251 provides a ligand contact to L-cysteinyl-5'-AMP; it reads GND. Residue histidine 256 coordinates Zn(2+). L-cysteinyl-5'-AMP is bound at residue isoleucine 283. Positions 289–293 match the 'KMSKS' region motif; the sequence is KMSKS.

The protein belongs to the class-I aminoacyl-tRNA synthetase family. MshC subfamily. As to quaternary structure, monomer. Zn(2+) serves as cofactor.

The catalysed reaction is 1D-myo-inositol 2-amino-2-deoxy-alpha-D-glucopyranoside + L-cysteine + ATP = 1D-myo-inositol 2-(L-cysteinylamino)-2-deoxy-alpha-D-glucopyranoside + AMP + diphosphate + H(+). Functionally, catalyzes the ATP-dependent condensation of GlcN-Ins and L-cysteine to form L-Cys-GlcN-Ins. This is L-cysteine:1D-myo-inositol 2-amino-2-deoxy-alpha-D-glucopyranoside ligase from Stackebrandtia nassauensis (strain DSM 44728 / CIP 108903 / NRRL B-16338 / NBRC 102104 / LLR-40K-21).